Reading from the N-terminus, the 95-residue chain is Embryonic abundant protein 1 (95 aa).

A compositionally biased stretch (polar residues) spans 1 to 10; that stretch reads MASGQQQQGR. Positions 1 to 95 are disordered; that stretch reads MASGQQQQGR…IDESKYKTKS (95 aa). Composition is skewed to basic and acidic residues over residues 40-64 and 75-95; these read AEGR…EMGR and GGER…KTKS.

The protein belongs to the small hydrophilic plant seed protein family. Expressed in dry seeds and immature embryos.

Functionally, em protein may act as a cytoplasm protectant during desiccation. The chain is Embryonic abundant protein 1 (EMP1) from Oryza sativa subsp. japonica (Rice).